Consider the following 516-residue polypeptide: Effector protein hopAB1 (516 aa).

2 disordered regions span residues 1-93 (MSGI…AQPA) and 175-259 (RALA…DEAL). The span at 16-30 (WRADDEPVTERERDS) shows a compositional bias: basic and acidic residues. Positions 31-41 (SSGANLTNSPQ) are enriched in polar residues. The span at 81-90 (PVEPRQPPEA) shows a compositional bias: pro residues. Composition is skewed to low complexity over residues 183 to 196 (PAPS…SRSS) and 212 to 224 (QTSS…SSTS).

The protein belongs to the HopAB family.

Its subcellular location is the secreted. Effector protein that plays different roles depending on the species and plant cultivars that interact with the pathogen. Acts as a virulence determinant by enhancing the development of disease symptoms and bacterial growth. Acts as an avirulence factor by eliciting hypersensitive response (HR) and plant resistance. This chain is Effector protein hopAB1 (hopAB1), found in Pseudomonas syringae pv. syringae (strain B728a).